Reading from the N-terminus, the 404-residue chain is Phosphopentomutase (404 aa).

Residues D10, D297, H302, D338, H339, and H350 each coordinate Mn(2+).

Belongs to the phosphopentomutase family. Requires Mn(2+) as cofactor.

It is found in the cytoplasm. It catalyses the reaction 2-deoxy-alpha-D-ribose 1-phosphate = 2-deoxy-D-ribose 5-phosphate. The enzyme catalyses alpha-D-ribose 1-phosphate = D-ribose 5-phosphate. Its pathway is carbohydrate degradation; 2-deoxy-D-ribose 1-phosphate degradation; D-glyceraldehyde 3-phosphate and acetaldehyde from 2-deoxy-alpha-D-ribose 1-phosphate: step 1/2. In terms of biological role, isomerase that catalyzes the conversion of deoxy-ribose 1-phosphate (dRib-1-P) and ribose 1-phosphate (Rib-1-P) to deoxy-ribose 5-phosphate (dRib-5-P) and ribose 5-phosphate (Rib-5-P), respectively. The chain is Phosphopentomutase from Colwellia psychrerythraea (strain 34H / ATCC BAA-681) (Vibrio psychroerythus).